We begin with the raw amino-acid sequence, 550 residues long: Eukaryotic translation initiation factor 3 subunit D-2 (550 aa).

The interval 108–152 (RTRGRTGRGTPNIASLGGSTAGGATASTTKYGKGRHTRNTQNVGR) is disordered. The segment covering 115–136 (RGTPNIASLGGSTAGGATASTT) has biased composition (low complexity). An RNA gate region spans residues 290–304 (QFDLLTVNETSVEPP). Residues 527-550 (PENAFDSDRDEEESSEPLSNSNDN) are disordered.

The protein belongs to the eIF-3 subunit D family. In terms of assembly, component of the eukaryotic translation initiation factor 3 (eIF-3) complex. The eIF-3 complex interacts with pix.

The protein localises to the cytoplasm. Functionally, mRNA cap-binding component of the eukaryotic translation initiation factor 3 (eIF-3) complex, which is involved in protein synthesis of a specialized repertoire of mRNAs and, together with other initiation factors, stimulates binding of mRNA and methionyl-tRNAi to the 40S ribosome. The eIF-3 complex specifically targets and initiates translation of a subset of mRNAs involved in cell proliferation. In the eIF-3 complex, eif3d specifically recognizes and binds the 7-methylguanosine cap of a subset of mRNAs. The chain is Eukaryotic translation initiation factor 3 subunit D-2 from Drosophila sechellia (Fruit fly).